The following is a 124-amino-acid chain: NADPH-dependent 7-cyano-7-deazaguanine reductase (124 aa).

Residue cysteine 40 is the Thioimide intermediate of the active site. Residue aspartate 47 is the Proton donor of the active site. Residues 62 to 64 and 81 to 82 each bind substrate; these read VEL and HE.

The protein belongs to the GTP cyclohydrolase I family. QueF type 1 subfamily.

The protein resides in the cytoplasm. The enzyme catalyses 7-aminomethyl-7-carbaguanine + 2 NADP(+) = 7-cyano-7-deazaguanine + 2 NADPH + 3 H(+). The protein operates within tRNA modification; tRNA-queuosine biosynthesis. In terms of biological role, catalyzes the NADPH-dependent reduction of 7-cyano-7-deazaguanine (preQ0) to 7-aminomethyl-7-deazaguanine (preQ1). The sequence is that of NADPH-dependent 7-cyano-7-deazaguanine reductase from Wolinella succinogenes (strain ATCC 29543 / DSM 1740 / CCUG 13145 / JCM 31913 / LMG 7466 / NCTC 11488 / FDC 602W) (Vibrio succinogenes).